The primary structure comprises 102 residues: Large ribosomal subunit protein bL21 (102 aa).

It belongs to the bacterial ribosomal protein bL21 family. Part of the 50S ribosomal subunit. Contacts protein L20.

Its function is as follows. This protein binds to 23S rRNA in the presence of protein L20. The protein is Large ribosomal subunit protein bL21 of Lachnospira eligens (strain ATCC 27750 / DSM 3376 / VPI C15-48 / C15-B4) (Eubacterium eligens).